Reading from the N-terminus, the 488-residue chain is Bifunctional pantoate ligase/cytidylate kinase (488 aa).

1 to 8 (MGALHRAH) provides a ligand contact to ATP. A pantoate--beta-alanine ligase region spans residues 1 to 251 (MGALHRAHGQ…CGETRLIDHT (251 aa)). Histidine 8 serves as the catalytic Proton donor. Glutamine 36 contacts (R)-pantoate. Glutamine 36 contacts beta-alanine. Residue 125–128 (GEKD) coordinates ATP. (R)-pantoate is bound at residue glutamine 131. Residues valine 154 and 162–165 (CSSR) each bind ATP. A cytidylate kinase region spans residues 252 to 488 (FLMSRQPIVA…PEEVWPTPGS (237 aa)).

This sequence in the N-terminal section; belongs to the pantothenate synthetase family. In the C-terminal section; belongs to the cytidylate kinase family. Type 1 subfamily.

It is found in the cytoplasm. It catalyses the reaction (R)-pantoate + beta-alanine + ATP = (R)-pantothenate + AMP + diphosphate + H(+). The catalysed reaction is CMP + ATP = CDP + ADP. The enzyme catalyses dCMP + ATP = dCDP + ADP. The protein operates within cofactor biosynthesis; (R)-pantothenate biosynthesis; (R)-pantothenate from (R)-pantoate and beta-alanine: step 1/1. Functionally, catalyzes the condensation of pantoate with beta-alanine in an ATP-dependent reaction via a pantoyl-adenylate intermediate. In terms of biological role, catalyzes the transfer of a phosphate group from ATP to either CMP or dCMP to form CDP or dCDP and ADP, respectively. In Prochlorococcus marinus (strain MIT 9303), this protein is Bifunctional pantoate ligase/cytidylate kinase.